The chain runs to 309 residues: Probable manganese-dependent inorganic pyrophosphatase (309 aa).

Positions 9, 13, 15, 75, 97, and 149 each coordinate Mn(2+).

It belongs to the PPase class C family. Requires Mn(2+) as cofactor.

It is found in the cytoplasm. It carries out the reaction diphosphate + H2O = 2 phosphate + H(+). The chain is Probable manganese-dependent inorganic pyrophosphatase from Bacillus cereus (strain AH187).